A 608-amino-acid polypeptide reads, in one-letter code: ATP-binding protein Uup (608 aa).

ABC transporter domains follow at residues 7 to 217 (APVL…AADA) and 285 to 512 (VEAK…FAPV). Residues 42-49 (GRNGAGKS) and 317-324 (GPNGAGKT) contribute to the ATP site. The segment at 522–608 (AAPAAPKKSA…LEEKKENLAG (87 aa)) is C-terminal domain (CTD), binds DNA.

The protein belongs to the ABC transporter superfamily. ABCF family. Uup subfamily.

The protein localises to the cytoplasm. The catalysed reaction is ATP + H2O = ADP + phosphate + H(+). In terms of biological role, probably plays a role in ribosome assembly or function. May be involved in resolution of branched DNA intermediates that result from template switching in postreplication gaps. Binds DNA and has ATPase activity. One of a cluster of genes involved in attachment of the holdfast to the cell. The holdfast is a structure that allows the bacteria to firmly adhere to surfaces. This chain is ATP-binding protein Uup, found in Caulobacter vibrioides (strain ATCC 19089 / CIP 103742 / CB 15) (Caulobacter crescentus).